Reading from the N-terminus, the 599-residue chain is Elongation factor 4 (599 aa).

The region spanning 5–187 is the tr-type G domain; sequence SHIRNFSIIA…RLVTAIPAPE (183 aa). GTP-binding positions include 17 to 22 and 134 to 137; these read DHGKST and NKMD.

This sequence belongs to the TRAFAC class translation factor GTPase superfamily. Classic translation factor GTPase family. LepA subfamily.

The protein localises to the cell inner membrane. It catalyses the reaction GTP + H2O = GDP + phosphate + H(+). In terms of biological role, required for accurate and efficient protein synthesis under certain stress conditions. May act as a fidelity factor of the translation reaction, by catalyzing a one-codon backward translocation of tRNAs on improperly translocated ribosomes. Back-translocation proceeds from a post-translocation (POST) complex to a pre-translocation (PRE) complex, thus giving elongation factor G a second chance to translocate the tRNAs correctly. Binds to ribosomes in a GTP-dependent manner. This is Elongation factor 4 from Pseudomonas aeruginosa (strain LESB58).